Consider the following 309-residue polypeptide: MTSRAPSPPTPPCPSPPALKSSPSPVPTATPASPPLKPLSNPLPPPPPTPRPSTSAGPSTPLPPPALRSSPSSALNASRGAPSTSPPPSSSPPSSPASTPPSRTPSPTPTAPASPVASTAMTPASPSVPPPPSAAPSSSAALSSAPPPSTAPLPRHEPRPPPPLPPPLQPPPGVRVPRSVAFPLPLARELPPLRLPPAPYLHPLLARLAPLRLRPPPDLPSPPLSPPLSPPLSPISPLHAPAPPPHPDPVLLPALSLAISRAAPDLLRLLSLLSPPSLFLLFTLLSIHFSPFPIFILLSLLLLLQFPRT.

Pro residues-rich tracts occupy residues 1-17 (MTSR…PSPP) and 24-51 (SPVP…PTPR). 2 disordered regions span residues 1 to 174 (MTSR…PPGV) and 216 to 240 (PPDL…PLHA). Over residues 67–83 (LRSSPSSALNASRGAPS) the composition is skewed to low complexity. Residues 84-112 (TSPPPSSSPPSSPASTPPSRTPSPTPTAP) show a composition bias toward pro residues. Composition is skewed to low complexity over residues 113–125 (ASPV…TPAS) and 135–144 (APSSSAALSS). Over residues 160–174 (PPPPLPPPLQPPPGV) the composition is skewed to pro residues. The helical transmembrane segment at 278 to 298 (LFLLFTLLSIHFSPFPIFILL) threads the bilayer.

The protein resides in the host membrane. This is an uncharacterized protein from Vitis vinifera (Grape).